A 120-amino-acid chain; its full sequence is Membrane-anchored ubiquitin-fold protein 4 (120 aa).

Residues 7–73 (VELKFRLYDG…LENGKTVAQC (67 aa)) form the Ubiquitin-like domain. Cys-115 is lipidated: S-palmitoyl cysteine. Residue Cys-117 is modified to Cysteine methyl ester. A lipid anchor (S-farnesyl cysteine) is attached at Cys-117. A propeptide spans 118–120 (TIM) (removed in mature form).

As to expression, ubiquitous.

The protein localises to the cell membrane. Functionally, may serve as docking site to facilitate the association of other proteins to the plasma membrane. The polypeptide is Membrane-anchored ubiquitin-fold protein 4 (MUB4) (Arabidopsis thaliana (Mouse-ear cress)).